The chain runs to 257 residues: Ditrans,polycis-undecaprenyl-diphosphate synthase ((2E,6E)-farnesyl-diphosphate specific) (257 aa).

Asp24 is a catalytic residue. Asp24 serves as a coordination point for Mg(2+). Substrate contacts are provided by residues 25 to 28 (GNGR), Trp29, Arg37, His41, and 69 to 71 (SSE). The Proton acceptor role is filled by Asn72. Residues Trp73, Arg75, Arg192, and 198-200 (RIS) contribute to the substrate site. Position 211 (Glu211) interacts with Mg(2+).

The protein belongs to the UPP synthase family. In terms of assembly, homodimer. Mg(2+) serves as cofactor.

The catalysed reaction is 8 isopentenyl diphosphate + (2E,6E)-farnesyl diphosphate = di-trans,octa-cis-undecaprenyl diphosphate + 8 diphosphate. Catalyzes the sequential condensation of isopentenyl diphosphate (IPP) with (2E,6E)-farnesyl diphosphate (E,E-FPP) to yield (2Z,6Z,10Z,14Z,18Z,22Z,26Z,30Z,34E,38E)-undecaprenyl diphosphate (di-trans,octa-cis-UPP). UPP is the precursor of glycosyl carrier lipid in the biosynthesis of bacterial cell wall polysaccharide components such as peptidoglycan and lipopolysaccharide. The chain is Ditrans,polycis-undecaprenyl-diphosphate synthase ((2E,6E)-farnesyl-diphosphate specific) from Aliivibrio fischeri (strain ATCC 700601 / ES114) (Vibrio fischeri).